Consider the following 544-residue polypeptide: Chaperonin GroEL 3 (544 aa).

Residues 30–33 (TLGP), lysine 51, 87–91 (DGTTT), glycine 415, and aspartate 496 contribute to the ATP site.

Belongs to the chaperonin (HSP60) family. In terms of assembly, forms a cylinder of 14 subunits composed of two heptameric rings stacked back-to-back. Interacts with the co-chaperonin GroES.

The protein resides in the cytoplasm. The catalysed reaction is ATP + H2O + a folded polypeptide = ADP + phosphate + an unfolded polypeptide.. Together with its co-chaperonin GroES, plays an essential role in assisting protein folding. The GroEL-GroES system forms a nano-cage that allows encapsulation of the non-native substrate proteins and provides a physical environment optimized to promote and accelerate protein folding. The protein is Chaperonin GroEL 3 of Rhizobium meliloti (strain 1021) (Ensifer meliloti).